Reading from the N-terminus, the 315-residue chain is Small ribosomal subunit protein uS3 (315 aa).

One can recognise a KH type-2 domain in the interval 38–106; that stretch reads IRKMMSRGME…QVQLNILEVK (69 aa). The tract at residues 211–315 is disordered; it reads AEREAQEALQ…VANTPEKAEE (105 aa). Residues 222–232 are compositionally biased toward basic residues; it reads QTRRERPRRGP. Over residues 265 to 315 the composition is skewed to low complexity; the sequence is APAETPAGEAAATEPTAPVAEPATAAASAPAEAASAPAEAAVANTPEKAEE.

The protein belongs to the universal ribosomal protein uS3 family. In terms of assembly, part of the 30S ribosomal subunit. Forms a tight complex with proteins S10 and S14.

Its function is as follows. Binds the lower part of the 30S subunit head. Binds mRNA in the 70S ribosome, positioning it for translation. The protein is Small ribosomal subunit protein uS3 of Frankia casuarinae (strain DSM 45818 / CECT 9043 / HFP020203 / CcI3).